Consider the following 235-residue polypeptide: Ribonuclease P protein component 3 (235 aa).

Belongs to the eukaryotic/archaeal RNase P protein component 3 family. As to quaternary structure, consists of a catalytic RNA component and at least 4-5 protein subunits.

It is found in the cytoplasm. It catalyses the reaction Endonucleolytic cleavage of RNA, removing 5'-extranucleotides from tRNA precursor.. Its function is as follows. Part of ribonuclease P, a protein complex that generates mature tRNA molecules by cleaving their 5'-ends. This is Ribonuclease P protein component 3 from Haloarcula marismortui (strain ATCC 43049 / DSM 3752 / JCM 8966 / VKM B-1809) (Halobacterium marismortui).